The sequence spans 229 residues: Large ribosomal subunit protein uL1 (229 aa).

The protein belongs to the universal ribosomal protein uL1 family. As to quaternary structure, part of the 50S ribosomal subunit.

Its function is as follows. Binds directly to 23S rRNA. The L1 stalk is quite mobile in the ribosome, and is involved in E site tRNA release. Protein L1 is also a translational repressor protein, it controls the translation of the L11 operon by binding to its mRNA. The protein is Large ribosomal subunit protein uL1 of Streptococcus pneumoniae (strain Taiwan19F-14).